We begin with the raw amino-acid sequence, 974 residues long: Membrane-associated phosphatidylinositol transfer protein 3 (974 aa).

S30, S31, S109, S295, S298, S321, S343, and S495 each carry phosphoserine. A disordered region spans residues G284–V304. The segment covering R292 to T302 has biased composition (polar residues). Disordered stretches follow at residues I323 to S346 and S491 to P536. Residues F390 to R594 enclose the DDHD domain. Residues E520–S533 are compositionally biased toward low complexity. S612, S907, S928, and S946 each carry phosphoserine. A disordered region spans residues M927–P974.

Belongs to the PtdIns transfer protein family. PI transfer class IIA subfamily. In terms of assembly, interacts with PTK2B via its C-terminus. As to expression, detected in brain and spleen, and at low levels in ovary.

It localises to the endomembrane system. Functionally, catalyzes the transfer of phosphatidylinositol and phosphatidylcholine between membranes (in vitro). Binds calcium ions. The sequence is that of Membrane-associated phosphatidylinositol transfer protein 3 (PITPNM3) from Homo sapiens (Human).